Here is a 321-residue protein sequence, read N- to C-terminus: Methenyltetrahydromethanopterin cyclohydrolase (321 aa).

This sequence belongs to the MCH family.

The protein localises to the cytoplasm. The catalysed reaction is 5,10-methenyl-5,6,7,8-tetrahydromethanopterin + H2O = N(5)-formyl-5,6,7,8-tetrahydromethanopterin + H(+). The protein operates within one-carbon metabolism; methanogenesis from CO(2); 5,10-methenyl-5,6,7,8-tetrahydromethanopterin from CO(2): step 3/3. Its function is as follows. Catalyzes the reversible interconversion of 5-formyl-H(4)MPT to methenyl-H(4)MPT(+). The polypeptide is Methenyltetrahydromethanopterin cyclohydrolase (Methanosarcina mazei (strain ATCC BAA-159 / DSM 3647 / Goe1 / Go1 / JCM 11833 / OCM 88) (Methanosarcina frisia)).